The chain runs to 97 residues: MTKKKRENLGVALEIDGLEEKLSQCRRDLEAVNSRLHSRELSPEARRSLEKEKNSLMNKASNYEKELKFLRQENRKNMLLSVAIFILLTLVYAYWTM.

The stretch at 10–79 (GVALEIDGLE…LRQENRKNML (70 aa)) forms a coiled coil. A helical transmembrane segment spans residues 78 to 95 (MLLSVAIFILLTLVYAYW).

Its subcellular location is the membrane. The polypeptide is Coiled-coil domain-containing protein 167 (CCDC167) (Homo sapiens (Human)).